The primary structure comprises 346 residues: D-alanine--D-alanine ligase (346 aa).

The region spanning 134 to 340 is the ATP-grasp domain; sequence KFLAESLGVK…IDYTYIHSIQ (207 aa). 161–212 is a binding site for ATP; the sequence is EYPVIIKPVRLGSSIGVSIVKSEAELDYALDVAFEFDNDVIVEPFIDGVKEF. Mg(2+)-binding residues include D284, E296, and N298.

The protein belongs to the D-alanine--D-alanine ligase family. The cofactor is Mg(2+). Requires Mn(2+) as cofactor.

The protein localises to the cytoplasm. It catalyses the reaction 2 D-alanine + ATP = D-alanyl-D-alanine + ADP + phosphate + H(+). Its pathway is cell wall biogenesis; peptidoglycan biosynthesis. Its function is as follows. Cell wall formation. The polypeptide is D-alanine--D-alanine ligase (Sulfurovum sp. (strain NBC37-1)).